Here is a 149-residue protein sequence, read N- to C-terminus: Calmodulin (149 aa).

The residue at position 2 (A2) is an N-acetylalanine. 4 EF-hand domains span residues 8–43 (EQIA…LGQN), 44–79 (PTEA…KMKD), 81–116 (DSEE…LGEK), and 117–149 (LTDE…MTTK). Ca(2+)-binding residues include D21, D23, D25, T27, E32, D57, D59, N61, T63, E68, D94, D96, N98, and E105. K116 is subject to N6,N6,N6-trimethyllysine. 5 residues coordinate Ca(2+): D130, D132, D134, Q136, and E141.

It belongs to the calmodulin family. In terms of assembly, interacts (in the presence of Ca(2+)) with pde-1, madf-3, rpl-7A, tax-6, efk-1, npp-1, obr-4, sos-1, akt-1, unc-13, tag-196, ugt-48, nmy-2, F27D4.4, ddx-23, efa-6 and R11H6.4.

Calmodulin mediates the control of a large number of enzymes, ion channels and other proteins by Ca(2+). Among the enzymes to be stimulated by the calmodulin-Ca(2+) complex are a number of protein kinases and phosphatases. This is Calmodulin (cmd-1) from Caenorhabditis elegans.